A 795-amino-acid polypeptide reads, in one-letter code: Lon protease (795 aa).

One can recognise a Lon N-terminal domain in the interval 7 to 213; it reads SQILVVRGQV…KIIQAGIEDL (207 aa). 379–386 lines the ATP pocket; it reads GPPGVGKS. One can recognise a Lon proteolytic domain in the interval 615-795; the sequence is VSLPGIVNGM…YSDIYNKLFS (181 aa). Catalysis depends on residues Ser-702 and Lys-745.

This sequence belongs to the peptidase S16 family. As to quaternary structure, homohexamer. Organized in a ring with a central cavity.

It is found in the cytoplasm. The enzyme catalyses Hydrolysis of proteins in presence of ATP.. Its function is as follows. ATP-dependent serine protease that mediates the selective degradation of mutant and abnormal proteins as well as certain short-lived regulatory proteins. Required for cellular homeostasis and for survival from DNA damage and developmental changes induced by stress. Degrades polypeptides processively to yield small peptide fragments that are 5 to 10 amino acids long. Binds to DNA in a double-stranded, site-specific manner. This Mycoplasma genitalium (strain ATCC 33530 / DSM 19775 / NCTC 10195 / G37) (Mycoplasmoides genitalium) protein is Lon protease.